Consider the following 176-residue polypeptide: Large ribosomal subunit protein uL6 (176 aa).

The protein belongs to the universal ribosomal protein uL6 family. Part of the 50S ribosomal subunit.

Its function is as follows. This protein binds to the 23S rRNA, and is important in its secondary structure. It is located near the subunit interface in the base of the L7/L12 stalk, and near the tRNA binding site of the peptidyltransferase center. The polypeptide is Large ribosomal subunit protein uL6 (Burkholderia vietnamiensis (strain G4 / LMG 22486) (Burkholderia cepacia (strain R1808))).